Consider the following 159-residue polypeptide: Putative pre-16S rRNA nuclease (159 aa).

Belongs to the YqgF nuclease family.

Its subcellular location is the cytoplasm. In terms of biological role, could be a nuclease involved in processing of the 5'-end of pre-16S rRNA. The sequence is that of Putative pre-16S rRNA nuclease from Agrobacterium fabrum (strain C58 / ATCC 33970) (Agrobacterium tumefaciens (strain C58)).